We begin with the raw amino-acid sequence, 334 residues long: Serine/threonine-protein kinase SAPK3 (334 aa).

The region spanning 5-261 (YEALKELGAG…IPEIKKHTWF (257 aa)) is the Protein kinase domain. ATP contacts are provided by residues 11–19 (LGAGNFGVA) and K34. D124 (proton acceptor) is an active-site residue.

The protein belongs to the protein kinase superfamily. Ser/Thr protein kinase family. Autophosphorylated in presence of Ca(2+). Expressed in leaves and maturing seeds, but not in roots and stems of field-grown plants.

The protein localises to the cytoplasm. It is found in the nucleus. The enzyme catalyses L-seryl-[protein] + ATP = O-phospho-L-seryl-[protein] + ADP + H(+). It catalyses the reaction L-threonyl-[protein] + ATP = O-phospho-L-threonyl-[protein] + ADP + H(+). Its activity is regulated as follows. Activated by phosphorylation. Its function is as follows. May play a role in signal transduction of hyperosmotic response. The protein is Serine/threonine-protein kinase SAPK3 (SAPK3) of Oryza sativa subsp. indica (Rice).